Reading from the N-terminus, the 603-residue chain is Proline--tRNA ligase (603 aa).

The protein belongs to the class-II aminoacyl-tRNA synthetase family. ProS type 1 subfamily. As to quaternary structure, homodimer.

It localises to the cytoplasm. It carries out the reaction tRNA(Pro) + L-proline + ATP = L-prolyl-tRNA(Pro) + AMP + diphosphate. Catalyzes the attachment of proline to tRNA(Pro) in a two-step reaction: proline is first activated by ATP to form Pro-AMP and then transferred to the acceptor end of tRNA(Pro). As ProRS can inadvertently accommodate and process non-cognate amino acids such as alanine and cysteine, to avoid such errors it has two additional distinct editing activities against alanine. One activity is designated as 'pretransfer' editing and involves the tRNA(Pro)-independent hydrolysis of activated Ala-AMP. The other activity is designated 'posttransfer' editing and involves deacylation of mischarged Ala-tRNA(Pro). The misacylated Cys-tRNA(Pro) is not edited by ProRS. This chain is Proline--tRNA ligase, found in Prochlorococcus marinus (strain SARG / CCMP1375 / SS120).